Here is a 713-residue protein sequence, read N- to C-terminus: MIINSQEYLQPPQWWNERVEAGNLLSISNGEQEPTNYLMTNVGNGYVAFVIGGESIYVGGVYNGPAINLGDANNLPSHRAGIPNFQNIEISNAQFQYAGLDIENATYTRVYSIPSSPGTIVKQIFYAHQKIRNILVQEIEVDNSNIETDVTLQLSVVGINLTANVDFNILNLTNTQFTGNDYQLYNLTIKVPEVNFMTSVAVTTTTIPQSITIKSGEKKKHHYVTSFLTNIETNDYIEGSLDIYKTTFLLADQLIKSHLDEWNKIWISGIEVGGDSHLQQVVNSSLYYLFSSIRDDWSYGMSPGGLASDGYNGHSFWDTETWMLPPILLLNPKLVRDCLLQYRINNLPGAHEKALSYKSNNYTGFMFPWESAFTGIEVCPTFAPTGILEQHITADIALAIRQYYYLTGDLDWLIDFGYKALKGIAEFWASRVEYDQLNQQYSINTIIPPDEYAVGVNNSVYTNVAVKMTFEWVIEVATLINDTENIPFEHWSSIANGLVILFDEVNQWHPEYQGYNGETIKQADVVLLGFPLMYNMSKEARKNDLIYYEAVTTNSGPAMTYSMHTVAWLELESLENATKQWFRSYNNCNNSPFLVWTETPTGGAVNFATGMGGFLQGLMFGYGGVRIHQGNLDFYPQLPEGTTSLKIRSMNYIGSTFNVGWNQTTITFEMLTFNPSVYLTLLSTEYDNIILNTLDPIYLTFGSKFQIYFNNNN.

The first 21 residues, 1–21 (MIINSQEYLQPPQWWNERVEA), serve as a signal peptide directing secretion. 5 N-linked (GlcNAc...) asparagine glycosylation sites follow: Asn-104, Asn-160, Asn-171, Asn-186, and Asn-283. 317–318 (WD) is a binding site for substrate. N-linked (GlcNAc...) asparagine glycosylation occurs at Asn-361. Catalysis depends on Glu-451, which acts as the Proton donor. 2 N-linked (GlcNAc...) asparagine glycosylation sites follow: Asn-457 and Asn-481. 521 to 522 (KQ) is a substrate binding site. Residues Asn-535, Asn-576, and Asn-662 are each glycosylated (N-linked (GlcNAc...) asparagine).

It belongs to the glycosyl hydrolase 65 family.

It localises to the secreted. The catalysed reaction is (5R)-5-O-[alpha-D-glucosyl-(1-&gt;2)-beta-D-galactosyl]-5-hydroxy-L-lysyl-[collagen] + H2O = (5R)-5-O-(beta-D-galactosyl)-5-hydroxy-L-lysyl-[collagen] + D-glucose. Functionally, catalyzes the hydrolysis of glucose from the disaccharide unit linked to hydroxylysine residues of collagen and collagen-like proteins. This is Protein-glucosylgalactosylhydroxylysine glucosidase from Dictyostelium discoideum (Social amoeba).